The chain runs to 738 residues: Junction plakoglobin (738 aa).

12 ARM repeats span residues 128 to 167, 168 to 211, 212 to 251, 254 to 293, 294 to 337, 338 to 377, 379 to 416, 419 to 460, 466 to 506, 508 to 547, 570 to 609, and 611 to 657; these read NYQD…QLSK, KEAS…LSHH, REGL…NLLL, EGAK…LLAY, GNQE…LSVC, PSNK…NLSD, ATKQ…NLTC, GRNK…HLTS, EVAQ…NLAL, PANH…QPYT, PVNR…ELAQ, and KEAA…ADYR.

The protein belongs to the beta-catenin family. In terms of assembly, homodimer.

It is found in the cell junction. Its subcellular location is the adherens junction. The protein resides in the desmosome. It localises to the cytoplasm. The protein localises to the cytoskeleton. It is found in the membrane. Functionally, common junctional plaque protein. The membrane-associated plaques are architectural elements in an important strategic position to influence the arrangement and function of both the cytoskeleton and the cells within the tissue. The presence of plakoglobin in both the desmosomes and in the intermediate junctions suggests that it plays a central role in the structure and function of submembranous plaques. The chain is Junction plakoglobin (jup) from Xenopus laevis (African clawed frog).